A 93-amino-acid polypeptide reads, in one-letter code: MASRCRSLSKPAFSAFRSAMNKPSIRPKSASSFIGVPPSPGFSRPIGQLGSLQSLLPLYSAVASARLTSCLGIDSQNSRSLAQGMLCSANPGV.

Residues 1-27 (MASRCRSLSKPAFSAFRSAMNKPSIRP) constitute a mitochondrion transit peptide.

As to expression, expressed in cotyledons, roots and flowers.

It is found in the mitochondrion. Its function is as follows. Essential for mitochondrial morphology, functionality and distribution. Contributes to 9-lipoxygenase (9-LOX)-derived oxylipin synthesis, but not to brassinosteroids (BRs) signaling. Required for waving-inducing oxylipin 9-hydroxyoctadecatrienoic acid and derivatives (e.g. 9-HOT, 2-HOE, 13-HOT, 13-HOD, 13-KOD, 12,13-KHOD, 9-HOT, 9-HOD, 9-KOT, 9-KOD and 9,10-KHOE)-mediated root development regulation, including callose deposition, root waving and lateral roots formation. Involved in basal plant defense toward pathogenic bacteria (e.g. Pseudomonas syringae pv tomato), both in compatible (e.g. Pst DC3000) and incompatible (e.g. Pst DC3000 avrRPM1) interactions, as well as against obligate biotrophic pathogenic fungi (e.g. Golovinomyces cichoracearum), probably via the promotion of callose deposition in the cell wall. Confers sensitivity to the herbicide isoxaben, a herbicide inhibiting cellulose synthesis and altering the cell wall. The protein is Protein NONRESPONDING TO OXYLIPINS 2, mitochondrial of Arabidopsis thaliana (Mouse-ear cress).